Consider the following 554-residue polypeptide: Condensin-2 complex subunit H2 (554 aa).

Phosphoserine occurs at positions 45, 178, 182, 199, and 200. The interval Pro154–Thr296 is disordered. Over residues Arg179 to Gln191 the composition is skewed to polar residues. Residues Gly201–Glu210 are compositionally biased toward acidic residues. Ser441 is subject to Phosphoserine.

It belongs to the CND2 H2 (condensin-2 subunit 2) family. In terms of assembly, component of the condensin-2 complex, which contains the SMC2 and SMC4 heterodimer, and three non SMC subunits, NCAPG2, NCAPH2 and NCAPD3 that probably regulate the complex.

The protein localises to the nucleus. In terms of biological role, regulatory subunit of the condensin-2 complex, a complex that seems to provide chromosomes with an additional level of organization and rigidity and in establishing mitotic chromosome architecture. May promote the resolution of double-strand DNA catenanes (intertwines) between sister chromatids. Condensin-mediated compaction likely increases tension in catenated sister chromatids, providing directionality for type II topoisomerase-mediated strand exchanges toward chromatid decatenation. Required for decatenation of chromatin bridges at anaphase. Early in neurogenesis, may play an essential role to ensure accurate mitotic chromosome condensation in neuron stem cells, ultimately affecting neuron pool and cortex size. Seems to have lineage-specific role in T-cell development. The chain is Condensin-2 complex subunit H2 (Ncaph2) from Rattus norvegicus (Rat).